The sequence spans 142 residues: Small ribosomal subunit protein uS12 (142 aa).

Residues Met1–Gln44 form a disordered region. Residues Leu11 to Arg27 show a composition bias toward basic and acidic residues.

Belongs to the universal ribosomal protein uS12 family. Part of the 30S ribosomal subunit.

Its function is as follows. With S4 and S5 plays an important role in translational accuracy. Located at the interface of the 30S and 50S subunits. The protein is Small ribosomal subunit protein uS12 of Natronomonas pharaonis (strain ATCC 35678 / DSM 2160 / CIP 103997 / JCM 8858 / NBRC 14720 / NCIMB 2260 / Gabara) (Halobacterium pharaonis).